We begin with the raw amino-acid sequence, 697 residues long: Polyribonucleotide nucleotidyltransferase (697 aa).

Mg(2+)-binding residues include Asp488 and Asp494. The KH domain occupies 555-614; sequence PTLLTLKINPDKIRDVIGKGGATIRALTEETGCTIDIEDDGSVKIYGETREKADEAVRRV. Positions 624–692 constitute an S1 motif domain; that stretch reads GAIYEGKVTR…QRGRIKLSMK (69 aa).

Belongs to the polyribonucleotide nucleotidyltransferase family. In terms of assembly, component of the RNA degradosome, which is a multiprotein complex involved in RNA processing and mRNA degradation. Mg(2+) is required as a cofactor.

It is found in the cytoplasm. It catalyses the reaction RNA(n+1) + phosphate = RNA(n) + a ribonucleoside 5'-diphosphate. Its function is as follows. Involved in mRNA degradation. Catalyzes the phosphorolysis of single-stranded polyribonucleotides processively in the 3'- to 5'-direction. The protein is Polyribonucleotide nucleotidyltransferase of Alcanivorax borkumensis (strain ATCC 700651 / DSM 11573 / NCIMB 13689 / SK2).